The sequence spans 180 residues: Large ribosomal subunit protein uL5 (180 aa).

It belongs to the universal ribosomal protein uL5 family. As to quaternary structure, forms a bridge to the 30S subunit in the 70S ribosome. Part of the 50S ribosomal subunit; part of the 5S rRNA/L5/L18/L25 (CTC) subcomplex. Is known to contact the 5S rRNA, 23S rRNA and the P site tRNA.

This is one of the proteins that bind and probably mediate the attachment of the 5S RNA into the large ribosomal subunit, where it forms part of the central protuberance. In the 70S ribosome it contacts protein S13 of the 30S subunit (bridge B1b), connecting the 2 subunits; this bridge is implicated in subunit movement. Contacts the P site tRNA; the 5S rRNA and some of its associated proteins might help stabilize positioning of ribosome-bound tRNAs. This Deinococcus radiodurans (strain ATCC 13939 / DSM 20539 / JCM 16871 / CCUG 27074 / LMG 4051 / NBRC 15346 / NCIMB 9279 / VKM B-1422 / R1) protein is Large ribosomal subunit protein uL5 (rplE).